The primary structure comprises 60 residues: Defensin MGD-1 (60 aa).

Intrachain disulfides connect C4/C25, C10/C33, C14/C35, and C21/C38. W28 is modified (3-hydroxytryptophan). A Cysteine amide modification is found at C38. The propeptide occupies G39 to F60.

Belongs to the invertebrate defensin family. Type 2 subfamily. The hydroxylation of the Trp-28 is not important for the antibacterial activity. As to expression, abundantly expressed in hemocytes.

It is found in the secreted. In terms of biological role, active against both Gram-positive and Gram-negative bacteria but is not cytotoxic towards human erythrocytes or protozoa. In Mytilus galloprovincialis (Mediterranean mussel), this protein is Defensin MGD-1 (FH3).